The following is a 567-amino-acid chain: Urease subunit alpha (567 aa).

Residues 129–567 (GGIDSHIHFI…LPMAQRYFLF (439 aa)) form the Urease domain. The Ni(2+) site is built by His-134, His-136, and Lys-217. At Lys-217 the chain carries N6-carboxylysine. A substrate-binding site is contributed by His-219. Ni(2+) contacts are provided by His-246 and His-272. The Proton donor role is filled by His-320. Asp-360 lines the Ni(2+) pocket.

It belongs to the metallo-dependent hydrolases superfamily. Urease alpha subunit family. In terms of assembly, heterotrimer of UreA (gamma), UreB (beta) and UreC (alpha) subunits. Three heterotrimers associate to form the active enzyme. The cofactor is Ni cation. Carboxylation allows a single lysine to coordinate two nickel ions.

It is found in the cytoplasm. It catalyses the reaction urea + 2 H2O + H(+) = hydrogencarbonate + 2 NH4(+). It participates in nitrogen metabolism; urea degradation; CO(2) and NH(3) from urea (urease route): step 1/1. The protein is Urease subunit alpha of Alcanivorax borkumensis (strain ATCC 700651 / DSM 11573 / NCIMB 13689 / SK2).